A 267-amino-acid chain; its full sequence is Phosphonoacetaldehyde hydrolase (267 aa).

Aspartate 10 acts as the Nucleophile in catalysis. Aspartate 10 and alanine 12 together coordinate Mg(2+). Residue lysine 51 is the Schiff-base intermediate with substrate of the active site. Residue aspartate 184 participates in Mg(2+) binding.

The protein belongs to the HAD-like hydrolase superfamily. PhnX family. As to quaternary structure, homodimer. Requires Mg(2+) as cofactor.

The enzyme catalyses phosphonoacetaldehyde + H2O = acetaldehyde + phosphate + H(+). Its function is as follows. Involved in phosphonate degradation. In Paraburkholderia phytofirmans (strain DSM 17436 / LMG 22146 / PsJN) (Burkholderia phytofirmans), this protein is Phosphonoacetaldehyde hydrolase.